We begin with the raw amino-acid sequence, 480 residues long: Major capsid protein (480 aa).

Its subcellular location is the virion. Its function is as follows. Major protein of the capsid. This is Major capsid protein (MCP-1) from Trichoplusia ni ascovirus 2c (TnAV-2c).